A 411-amino-acid polypeptide reads, in one-letter code: Aspartate kinase (411 aa).

The ACT domain maps to 265 to 348 (LTIRGVPDTP…KIAKVSIVGV (84 aa)).

The protein belongs to the aspartokinase family.

Its subcellular location is the cytoplasm. The enzyme catalyses L-aspartate + ATP = 4-phospho-L-aspartate + ADP. The protein operates within amino-acid biosynthesis; L-lysine biosynthesis via DAP pathway; (S)-tetrahydrodipicolinate from L-aspartate: step 1/4. It functions in the pathway amino-acid biosynthesis; L-methionine biosynthesis via de novo pathway; L-homoserine from L-aspartate: step 1/3. Its pathway is amino-acid biosynthesis; L-threonine biosynthesis; L-threonine from L-aspartate: step 1/5. Its activity is regulated as follows. Allosterically feedback inhibited by L-lysine and L-threonine individually and also subject to a concerted feedback inhibition by these amino acids. Functionally, involved in the biosynthesis of L-aspartate-beta-semialdehyde which is a central intermediate in the biosynthesis of different amino acids (L-lysine, L-methionine, L-threonine). Catalyzes the phosphorylation of the beta-carboxyl group of L-aspartate to yield 4-phospho-L-aspartate. The protein is Aspartate kinase of Pseudomonas putida (strain ATCC 47054 / DSM 6125 / CFBP 8728 / NCIMB 11950 / KT2440).